The primary structure comprises 589 residues: Class I diterpene synthase 2, chloroplastic (589 aa).

Residues aspartate 328, aspartate 332, asparagine 472, threonine 476, and glutamate 480 each coordinate Mg(2+). The DDXXD motif motif lies at 328 to 332 (DDFFD).

It belongs to the terpene synthase family. It depends on Mg(2+) as a cofactor. In terms of tissue distribution, mostly expressed in trichomes of leaves and fruits.

Its subcellular location is the plastid. The protein resides in the chloroplast. The catalysed reaction is 9alpha-copalyl diphosphate + H2O = (13S)-vitexifolin A + diphosphate. The enzyme catalyses peregrinol diphosphate = (13R)-9,13-epoxylabd-14-ene + diphosphate. It catalyses the reaction peregrinol diphosphate + H2O = viteagnusin D + diphosphate. It participates in secondary metabolite biosynthesis; terpenoid biosynthesis. Its function is as follows. Involved in the biosynthesis of labdane-type diterpenoid including cleroda-dienols, and peregrinol lactones and furan derivatives, dopaminergic diterpenoids that can bind to dopamine receptors in the human pituitary gland, have probably ability to lower prolactin levels, and are used to treat menstrual cycle disorders (e.g. premenstrual syndrome and mastodynia). Terpene synthase the catalyzes the conversion of peregrinol diphosphate to viteagnusin D and 9,13(R)-epoxy-labd-14-ene, and of syn-copalyl diphosophate to vitexifolin A. The protein is Class I diterpene synthase 2, chloroplastic of Vitex agnus-castus (Chaste tree).